A 57-amino-acid chain; its full sequence is Temporin-ALk (57 aa).

The signal sequence occupies residues 1-22 (MFTLKKSLLLLFFLGTINLSLC). The propeptide occupies 23–46 (EQERNAEEERRDDLGERQAEVEKR). Residue Ser-56 is modified to Serine amide.

It belongs to the frog skin active peptide (FSAP) family. Temporin subfamily. As to expression, expressed by the skin glands.

It is found in the secreted. In terms of biological role, antimicrobial peptide with weak activity against Gram-positive and Gram-negative bacteria and against fungi. Has been tested against S.aureus (MIC=15.0 ug/mL), B.pumilus (no activity detected), B.cereus (no activity detected), E.coli (MIC=30.0 ug/mL), B.dysenteriae (MIC=60.0 ug/mL), A.cacoaceticus (MIC=75.0 ug/mL), P.aeruginosa (MIC=25.0 ug/mL) and C.albicans (MIC=15.0 ug/mL). Also shows a weak hemolytic activity. This Amolops loloensis (Lolokou Sucker Frog) protein is Temporin-ALk.